A 506-amino-acid chain; its full sequence is AMP phosphorylase (506 aa).

AMP-binding positions include G167, 193 to 198, and T202; that span reads SRAITG. The active-site Proton donor is the D255. Residues S263 and K287 each contribute to the AMP site.

Belongs to the thymidine/pyrimidine-nucleoside phosphorylase family. Type 2 subfamily.

The catalysed reaction is AMP + phosphate = alpha-D-ribose 1,5-bisphosphate + adenine. It carries out the reaction CMP + phosphate = cytosine + alpha-D-ribose 1,5-bisphosphate. It catalyses the reaction UMP + phosphate = alpha-D-ribose 1,5-bisphosphate + uracil. In terms of biological role, catalyzes the conversion of AMP and phosphate to adenine and ribose 1,5-bisphosphate (R15P). Exhibits phosphorylase activity toward CMP and UMP in addition to AMP. Functions in an archaeal AMP degradation pathway, together with R15P isomerase and RubisCO. The protein is AMP phosphorylase of Methanosarcina acetivorans (strain ATCC 35395 / DSM 2834 / JCM 12185 / C2A).